A 312-amino-acid chain; its full sequence is DNA-directed RNA polymerase subunit alpha (312 aa).

Residues Met1 to Thr229 form an alpha N-terminal domain (alpha-NTD) region. The alpha C-terminal domain (alpha-CTD) stretch occupies residues Ser241 to Ala312.

It belongs to the RNA polymerase alpha chain family. In cyanobacteria the RNAP catalytic core is composed of 2 alpha, 1 beta, 1 beta', 1 gamma and 1 omega subunit. When a sigma factor is associated with the core the holoenzyme is formed, which can initiate transcription.

The enzyme catalyses RNA(n) + a ribonucleoside 5'-triphosphate = RNA(n+1) + diphosphate. Functionally, DNA-dependent RNA polymerase catalyzes the transcription of DNA into RNA using the four ribonucleoside triphosphates as substrates. The polypeptide is DNA-directed RNA polymerase subunit alpha (Synechococcus sp. (strain RCC307)).